We begin with the raw amino-acid sequence, 180 residues long: D-lyxose ketol-isomerase (180 aa).

Lys62 is a D-fructose binding site. His75 and His77 together coordinate Mn(2+). Lys86 is a D-fructose binding site. Residues Glu88 and His143 each coordinate Mn(2+). Positions 156, 166, and 175 each coordinate D-fructose.

The protein belongs to the D-lyxose ketol-isomerase family. As to quaternary structure, homodimer; disulfide-linked. Stabilized by a disulfide bond between the two monomers of the dimeric enzyme and increased hydrophobicity at the dimer interface. Mn(2+) is required as a cofactor.

The enzyme catalyses D-lyxose = D-xylulose. In terms of biological role, sugar isomerase that catalyzes the reversible isomerization of D-lyxose to D-xylulose. Is highly specific for the substrate D-lyxose, showing less than 2% activity towards mannose and other substrates reported for lyxose isomerases. The protein is D-lyxose ketol-isomerase of Thermofilum sp. (strain ex4484_79).